Consider the following 132-residue polypeptide: Large ribosomal subunit protein uL24 (132 aa).

This sequence belongs to the universal ribosomal protein uL24 family. Part of the 50S ribosomal subunit.

One of two assembly initiator proteins, it binds directly to the 5'-end of the 23S rRNA, where it nucleates assembly of the 50S subunit. Its function is as follows. One of the proteins that surrounds the polypeptide exit tunnel on the outside of the subunit. In Aquifex aeolicus (strain VF5), this protein is Large ribosomal subunit protein uL24.